Consider the following 266-residue polypeptide: F-box only protein 50 (266 aa).

Over residues 1–16 (MEKTQDRDTLSGRMEA) the composition is skewed to basic and acidic residues. The segment at 1–53 (MEKTQDRDTLSGRMEAEGSLNSEELPPHPQSPPPPPSPRSPTSPVTPELPQPN) is disordered. Pro residues predominate over residues 27–41 (PHPQSPPPPPSPRSP). Residues serine 31, serine 37, serine 40, and serine 43 each carry the phosphoserine modification. At threonine 46 the chain carries Phosphothreonine. An FBA domain is found at 86 to 264 (LFLERPLYRN…VTDSSVSVQL (179 aa)).

In terms of tissue distribution, strongly expressed in kidney. Weakly expressed in stomach, colon, duodenum and prostate.

It localises to the cytoplasm. In terms of biological role, promotes cell proliferation. In Mus musculus (Mouse), this protein is F-box only protein 50 (Nccrp1).